The sequence spans 193 residues: uncharacterized protein (193 aa).

2 disordered regions span residues 1–67 and 110–160; these read MSGP…GPRS and QRTP…LPGS. Composition is skewed to low complexity over residues 50 to 64 and 148 to 160; these read GPQR…ARPG and AGAS…LPGS.

This is an uncharacterized protein from Homo sapiens (Human).